Here is a 316-residue protein sequence, read N- to C-terminus: Adenine deaminase (316 aa).

His14, His16, and His194 together coordinate Zn(2+). The active-site Proton donor is the Glu197. Asp275 contacts Zn(2+). Residue Asp276 coordinates substrate.

Belongs to the metallo-dependent hydrolases superfamily. Adenosine and AMP deaminases family. Adenine deaminase type 2 subfamily. Requires Zn(2+) as cofactor.

The catalysed reaction is adenine + H2O + H(+) = hypoxanthine + NH4(+). Catalyzes the hydrolytic deamination of adenine to hypoxanthine. Plays an important role in the purine salvage pathway and in nitrogen catabolism. The polypeptide is Adenine deaminase (Pseudomonas aeruginosa (strain LESB58)).